Consider the following 130-residue polypeptide: Single-stranded DNA-binding protein 1 (130 aa).

One can recognise an SSB domain in the interval 1 to 104 (MINNVVLIGR…VVAESFQILE (104 aa)). The interval 108–130 (NTANTSSLADSMPDYGPEPDLPF) is disordered.

As to quaternary structure, homotetramer.

This Streptococcus pyogenes serotype M18 (strain MGAS8232) protein is Single-stranded DNA-binding protein 1 (ssb1).